Here is a 180-residue protein sequence, read N- to C-terminus: Crossover junction endodeoxyribonuclease RuvC (180 aa).

Residues Asp-7, Glu-66, and Asp-138 contribute to the active site. Residues Asp-7, Glu-66, and Asp-138 each coordinate Mg(2+).

The protein belongs to the RuvC family. As to quaternary structure, homodimer which binds Holliday junction (HJ) DNA. The HJ becomes 2-fold symmetrical on binding to RuvC with unstacked arms; it has a different conformation from HJ DNA in complex with RuvA. In the full resolvosome a probable DNA-RuvA(4)-RuvB(12)-RuvC(2) complex forms which resolves the HJ. It depends on Mg(2+) as a cofactor.

It is found in the cytoplasm. It catalyses the reaction Endonucleolytic cleavage at a junction such as a reciprocal single-stranded crossover between two homologous DNA duplexes (Holliday junction).. In terms of biological role, the RuvA-RuvB-RuvC complex processes Holliday junction (HJ) DNA during genetic recombination and DNA repair. Endonuclease that resolves HJ intermediates. Cleaves cruciform DNA by making single-stranded nicks across the HJ at symmetrical positions within the homologous arms, yielding a 5'-phosphate and a 3'-hydroxyl group; requires a central core of homology in the junction. The consensus cleavage sequence is 5'-(A/T)TT(C/G)-3'. Cleavage occurs on the 3'-side of the TT dinucleotide at the point of strand exchange. HJ branch migration catalyzed by RuvA-RuvB allows RuvC to scan DNA until it finds its consensus sequence, where it cleaves and resolves the cruciform DNA. The sequence is that of Crossover junction endodeoxyribonuclease RuvC from Herminiimonas arsenicoxydans.